We begin with the raw amino-acid sequence, 542 residues long: MFGGFETIEAFEDDLYRDDSSSELSVDSEVEFQLYSQVHYSQNIHNANEEEGYEEKNCESSETVSIQPDQKNLIVLSDSEVIQLSDTSEVITLSDEDSIYRCKRKNIEVQAQEKTQSPATPRSNKVANKCKRSNKKPEPEESPSTIREVMIIEVSSDEEEESTISENENVESWMLLGCEEDDKDNDILLNLVGCKDAGAEGENDVNWFISDKDIEAKIDNNRSSGRWNNRYYSVNKNVTCRNCDKRGHLSKNCPLPQKVRPCCLCSERGHLQYGCPARYCLDCSLPMSSTHRCFERSSWRKRCDRCDMIGHYADACPEIWRQYHLTTKPGPPKKPKTPSGQSALVYCYNCAQKGHYGHECTERRMFNQAFPTSPFIYCYDDKYDIQQRDRRIKRKLKDIKKNGDFPRQFKRPHGEETDRYHHDRRKSRFSGKRSRWPRESKETQKEKTRGREGEKHRRDRQPRDEDEDFPRGLKPNSSSSSNSQKPSKSLHQASHYHRLREEKLRRESMRSKPKKRKFVEDGSHDDLFLIKQRKKKPKSSGF.

The disordered stretch occupies residues 110–144 (QAQEKTQSPATPRSNKVANKCKRSNKKPEPEESPS). Residues 112-126 (QEKTQSPATPRSNKV) are compositionally biased toward polar residues. Glycyl lysine isopeptide (Lys-Gly) (interchain with G-Cter in SUMO2) cross-links involve residues K129 and K136. Phosphoserine is present on S142. Glycyl lysine isopeptide (Lys-Gly) (interchain with G-Cter in SUMO2) cross-links involve residues K236 and K251. 3 CCHC-type zinc fingers span residues 238–255 (VTCR…NCPL), 260–277 (RPCC…GCPA), and 301–318 (KRCD…ACPE). K336 participates in a covalent cross-link: Glycyl lysine isopeptide (Lys-Gly) (interchain with G-Cter in SUMO2). Residues 345 to 362 (VYCYNCAQKGHYGHECTE) form a CCHC-type 4 zinc finger. A disordered region spans residues 396–542 (LKDIKKNGDF…RKKKPKSSGF (147 aa)). Residue K410 forms a Glycyl lysine isopeptide (Lys-Gly) (interchain with G-Cter in SUMO2) linkage. Positions 412 to 421 (PHGEETDRYH) are enriched in basic and acidic residues. Residues 422–435 (HDRRKSRFSGKRSR) show a composition bias toward basic residues. Residue K432 forms a Glycyl lysine isopeptide (Lys-Gly) (interchain with G-Cter in SUMO2) linkage. The span at 436–456 (WPRESKETQKEKTRGREGEKH) shows a compositional bias: basic and acidic residues. K474 participates in a covalent cross-link: Glycyl lysine isopeptide (Lys-Gly) (interchain with G-Cter in SUMO2). A compositionally biased stretch (low complexity) spans 474–489 (KPNSSSSSNSQKPSKS). 2 positions are modified to phosphoserine: S478 and S480. Residues K485 and K488 each participate in a glycyl lysine isopeptide (Lys-Gly) (interchain with G-Cter in SUMO2) cross-link. 2 stretches are compositionally biased toward basic and acidic residues: residues 499-510 (LREEKLRRESMR) and 518-528 (FVEDGSHDDLF). A Glycyl lysine isopeptide (Lys-Gly) (interchain with G-Cter in SUMO2) cross-link involves residue K531. Residues 531–542 (KQRKKKPKSSGF) are compositionally biased toward basic residues.

In terms of assembly, component of a nucleolar TRAMP-like complex, an ATP-dependent exosome regulatory complex consisting of a helicase (MTREX), an oligadenylate polymerase (TENT4B or TENT4A), and a substrate specific RNA-binding factor (ZCCHC7 or ZCCHC8). Several TRAMP-like complexes exist with specific compositions and are associated with nuclear, or nucleolar RNA exosomes.

The protein localises to the nucleus. Its subcellular location is the nucleolus. This is Zinc finger CCHC domain-containing protein 7 (Zcchc7) from Rattus norvegicus (Rat).